A 77-amino-acid chain; its full sequence is Putative defensin-like protein 129 (77 aa).

Positions 1–25 (MTKNTALTIFMVVLVIEMVMEETQG) are cleaved as a signal peptide. Disulfide bonds link Cys28–Cys77, Cys37–Cys59, Cys42–Cys71, and Cys46–Cys73.

This sequence belongs to the DEFL family.

It localises to the secreted. This is Putative defensin-like protein 129 (LCR13) from Arabidopsis thaliana (Mouse-ear cress).